The following is a 209-amino-acid chain: Cerebral peptide 1 (209 aa).

The N-terminal stretch at 1–20 is a signal peptide; the sequence is MLLAKISVVVLLLAIDGTSS. Residues 21–39 are compositionally biased toward polar residues; the sequence is SESTDNVVLSSSPDSQKAA. Positions 21-43 are cleaved as a propeptide — connecting peptide 1; sequence SESTDNVVLSSSPDSQKAATSRH. A disordered region spans residues 21–56; the sequence is SESTDNVVLSSSPDSQKAATSRHKRAPGWGKRSSLN. A Tryptophan amide modification is found at Trp49. Positions 53–77 are cleaved as a propeptide — connecting peptide 2; the sequence is SSLNDEDLFADSDSAQELLDSVAAL. Tryptophan amide occurs at positions 83 and 105. The tract at residues 98–169 is disordered; sequence EAKRAPGWGK…APGWGKRSGG (72 aa). The propeptide at 109 to 122 is connecting peptide 4; it reads GQEIDVDEDGSEQE. Tryptophan amide is present on residues Trp128, Trp135, Trp142, Trp149, Trp156, and Trp163. Residues 167-191 constitute a propeptide, connecting peptide 5; that stretch reads SGGDYCETLEKMVDAYIYKAVEVDS. The cysteines at positions 172 and 197 are disulfide-linked.

As to quaternary structure, homodimer; disulfide-linked. In terms of tissue distribution, cerebral peptide 1 is expressed in the cerebral, pedal and buccal ganglia and B1 and B2 neurons. APGW-amide is expressed in buccal ganglia and several neurons.

It is found in the secreted. Its function is as follows. May function as a peptide transmitter. This chain is Cerebral peptide 1, found in Aplysia californica (California sea hare).